A 473-amino-acid chain; its full sequence is MKKGRVSQVLGPVVDVRFEDGHLPEIYNAIKISQPAASENEVGIDLTLEVALHLGDDTVRTIAMASTDGVQRGMEAVDTGAPISVPVGDVTLGRVFNVLGENIDLNEPVPADAKKDPIHRQAPSFDQLSTEVEILETGIKVVDLLAPYIKGGKIGLFGGAGVGKTVLIQELINNIAQEHGGISVFAGVGERTREGNDLFYEMSDSGVINKTAMVFGQMNEPPGARMRVALTGLTMAEHFRDVQGQDVLFFIDNIFRFTQAGSEVSALLGRMPSAVGYQPTLATEMGQLQERITSTNVGSVTSIQAIYVPADDYTDPAPATTFAHLDATTNLERKLTEMGIYPAVDPLASTSRALAPEIVGEEHYAVAREVQSTLQRYKELQDIIAILGMDELGEEDKLVVHRARRIQFFLSQNFHVAEQFTGQKGSYVPVKETVQGFKEILAGKYDHLPEDAFRLVGRIEEVVEKAKEMGVEV.

Residue 158–165 coordinates ATP; sequence GGAGVGKT.

Belongs to the ATPase alpha/beta chains family. F-type ATPases have 2 components, CF(1) - the catalytic core - and CF(0) - the membrane proton channel. CF(1) has five subunits: alpha(3), beta(3), gamma(1), delta(1), epsilon(1). CF(0) has three main subunits: a(1), b(2) and c(9-12). The alpha and beta chains form an alternating ring which encloses part of the gamma chain. CF(1) is attached to CF(0) by a central stalk formed by the gamma and epsilon chains, while a peripheral stalk is formed by the delta and b chains. The F(1)F(0) complex interacts with SpoIIIJ and YqjG; YqgA is found in the same complex.

It localises to the cell membrane. It is found in the membrane raft. It carries out the reaction ATP + H2O + 4 H(+)(in) = ADP + phosphate + 5 H(+)(out). In terms of biological role, produces ATP from ADP in the presence of a proton gradient across the membrane. The catalytic sites are hosted primarily by the beta subunits. This is ATP synthase subunit beta from Bacillus subtilis (strain 168).